Reading from the N-terminus, the 361-residue chain is Phosphoserine aminotransferase (361 aa).

Residue R42 participates in L-glutamate binding. Residues 76–77 (AT), W102, T152, D172, and Q195 each bind pyridoxal 5'-phosphate. K196 is subject to N6-(pyridoxal phosphate)lysine. Pyridoxal 5'-phosphate is bound at residue 237-238 (NT).

It belongs to the class-V pyridoxal-phosphate-dependent aminotransferase family. SerC subfamily. Homodimer. Pyridoxal 5'-phosphate serves as cofactor.

The protein resides in the cytoplasm. It catalyses the reaction O-phospho-L-serine + 2-oxoglutarate = 3-phosphooxypyruvate + L-glutamate. It carries out the reaction 4-(phosphooxy)-L-threonine + 2-oxoglutarate = (R)-3-hydroxy-2-oxo-4-phosphooxybutanoate + L-glutamate. The protein operates within amino-acid biosynthesis; L-serine biosynthesis; L-serine from 3-phospho-D-glycerate: step 2/3. Its pathway is cofactor biosynthesis; pyridoxine 5'-phosphate biosynthesis; pyridoxine 5'-phosphate from D-erythrose 4-phosphate: step 3/5. Its function is as follows. Catalyzes the reversible conversion of 3-phosphohydroxypyruvate to phosphoserine and of 3-hydroxy-2-oxo-4-phosphonooxybutanoate to phosphohydroxythreonine. The protein is Phosphoserine aminotransferase of Xanthomonas campestris pv. campestris (strain B100).